The following is a 151-amino-acid chain: MAQQMPSPEEIAAQLQMIRDQIAELQGVLAQLELRLRSVQAAKETVEKAAGQDGETLFPGDPELNTILKARLLEPGKAIVHLGLNVYAKLDTAKATEILAKKEDALKRSLETLKQELDKLSRTHDQYLQLLQALTAGQAAQQAGQQQKQGS.

It belongs to the prefoldin subunit alpha family. Heterohexamer of two alpha and four beta subunits.

Its subcellular location is the cytoplasm. Molecular chaperone capable of stabilizing a range of proteins. Seems to fulfill an ATP-independent, HSP70-like function in archaeal de novo protein folding. The sequence is that of Prefoldin subunit alpha (pfdA) from Aeropyrum pernix (strain ATCC 700893 / DSM 11879 / JCM 9820 / NBRC 100138 / K1).